Reading from the N-terminus, the 334-residue chain is Thiamine thiazole synthase (334 aa).

Substrate is bound by residues Cys86, 107–108 (EA), Gly115, and Val183. Position 221 is a 2,3-didehydroalanine (Cys) (Cys221). Substrate contacts are provided by residues Asp223, His238, Met290, and 300–302 (RMG).

The protein belongs to the THI4 family. As to quaternary structure, homooctamer. The cofactor is Fe cation. During the catalytic reaction, a sulfide is transferred from Cys-221 to a reaction intermediate, generating a dehydroalanine residue.

It is found in the cytoplasm. The protein localises to the nucleus. The enzyme catalyses [ADP-thiazole synthase]-L-cysteine + glycine + NAD(+) = [ADP-thiazole synthase]-dehydroalanine + ADP-5-ethyl-4-methylthiazole-2-carboxylate + nicotinamide + 3 H2O + 2 H(+). Functionally, involved in biosynthesis of the thiamine precursor thiazole. Catalyzes the conversion of NAD and glycine to adenosine diphosphate 5-(2-hydroxyethyl)-4-methylthiazole-2-carboxylic acid (ADT), an adenylated thiazole intermediate. The reaction includes an iron-dependent sulfide transfer from a conserved cysteine residue of the protein to a thiazole intermediate. The enzyme can only undergo a single turnover, which suggests it is a suicide enzyme. May have additional roles in adaptation to various stress conditions and in DNA damage tolerance. The protein is Thiamine thiazole synthase of Ajellomyces capsulatus (strain G186AR / H82 / ATCC MYA-2454 / RMSCC 2432) (Darling's disease fungus).